The chain runs to 442 residues: Alpha-1,6-mannosyl-glycoprotein 2-beta-N-acetylglucosaminyltransferase (442 aa).

The Cytoplasmic portion of the chain corresponds to 1–9 (MRFRIYKRK). A helical; Signal-anchor for type II membrane protein membrane pass occupies residues 10–29 (VLILTLVVAACGFVLWSSNG). Over 30–442 (RQRKSDALGP…ELCKSYRRLQ (413 aa)) the chain is Lumenal. 2 N-linked (GlcNAc...) asparagine glycosylation sites follow: N64 and N81. Substrate is bound by residues 118–122 (QVHNR) and D149. A disulfide bond links C191 and C205. Residue 224–228 (QTKHH) coordinates substrate. Residue D256 coordinates Mn(2+). The cysteines at positions 278 and 281 are disulfide-linked. R293 is a substrate binding site. Intrachain disulfides connect C329/C352, C334/C435, and C373/C381. A Mn(2+)-binding site is contributed by H369.

Belongs to the glycosyltransferase 16 (GT16) protein family. As to quaternary structure, homodimer. Mn(2+) serves as cofactor. As to expression, detected in liver, lung, testis, kidney, brain, spleen, thymus, uterus and intestine.

Its subcellular location is the golgi apparatus membrane. The catalysed reaction is an N(4)-{beta-D-GlcNAc-(1-&gt;2)-alpha-D-Man-(1-&gt;3)-[alpha-D-Man-(1-&gt;6)]-beta-D-Man-(1-&gt;4)-beta-D-GlcNAc-(1-&gt;4)-beta-D-GlcNAc}-L-asparaginyl-[protein] + UDP-N-acetyl-alpha-D-glucosamine = N(4)-{beta-D-GlcNAc-(1-&gt;2)-alpha-D-Man-(1-&gt;3)-[beta-D-GlcNAc-(1-&gt;2)-alpha-D-Man-(1-&gt;6)]-beta-D-Man-(1-&gt;4)-beta-D-GlcNAc-(1-&gt;4)-beta-D-GlcNAc}-L-asparaginyl-[protein] + UDP + H(+). It functions in the pathway protein modification; protein glycosylation. Functionally, plays an essential role in protein N-glycosylation. Catalyzes the transfer of N-acetylglucosamine (GlcNAc) onto the free terminal mannose moiety in the core structure of the nascent N-linked glycan chain, giving rise to the second branch in complex glycans. This chain is Alpha-1,6-mannosyl-glycoprotein 2-beta-N-acetylglucosaminyltransferase (Mgat2), found in Mus musculus (Mouse).